A 251-amino-acid chain; its full sequence is MASEKASNPKARYQRILLKLSGEALMGDGKYGISPKTLTSIAHDVKDVVDLGVEVALTIGGGNIFRGVSGATEGMDRSSADYMGMLATVINSMALQDALEKIGVPTRVQSAIEMHQVAEPYIRRRAIRHLEKGRVVIFAAGTGNPYFTTDTAASLRAMEIHADVLLKATKVDGVYTDDPKKNPAATKFKQLSYIDVLKKNLKVMDSTAISLCMDNDLPIVVFDLTQRGNVRKVVLGEEIGTTVGRPSARNA.

19–22 lines the ATP pocket; sequence KLSG. Gly61 lines the UMP pocket. Residues Gly62 and Arg66 each coordinate ATP. Residues Asp81 and 142 to 149 each bind UMP; that span reads TGNPYFTT. 3 residues coordinate ATP: Thr169, Tyr175, and Asp178.

It belongs to the UMP kinase family. In terms of assembly, homohexamer.

The protein resides in the cytoplasm. It catalyses the reaction UMP + ATP = UDP + ADP. It participates in pyrimidine metabolism; CTP biosynthesis via de novo pathway; UDP from UMP (UMPK route): step 1/1. With respect to regulation, inhibited by UTP. Its function is as follows. Catalyzes the reversible phosphorylation of UMP to UDP. This chain is Uridylate kinase, found in Anaeromyxobacter dehalogenans (strain 2CP-C).